The sequence spans 287 residues: Sulfofructosephosphate aldolase (287 aa).

Asp82 acts as the Proton donor in catalysis. Residues His83 and His180 each contribute to the Zn(2+) site. A dihydroxyacetone phosphate-binding site is contributed by Gly181. His208 is a Zn(2+) binding site. Residues 209–211 (GGS) and 230–233 (NVDT) each bind dihydroxyacetone phosphate.

It belongs to the class II fructose-bisphosphate aldolase family. Zn(2+) serves as cofactor.

The catalysed reaction is 6-deoxy-6-sulfo-D-fructose 1-phosphate = (2S)-3-sulfolactaldehyde + dihydroxyacetone phosphate. Its function is as follows. Part of the sulfo-EMP2 pathway, a D-sulfoquinovose degradation pathway that produces sulfolactate (SL). Cleaves 6-deoxy-6-sulfo-D-fructose 1-phosphate (SFP) to form dihydroxyacetone phosphate (DHAP) and 3-sulfolactaldehyde (SLA). The polypeptide is Sulfofructosephosphate aldolase (Alkalicoccus urumqiensis (Bacillus urumqiensis)).